Here is a 130-residue protein sequence, read N- to C-terminus: UPF0102 protein BT_1882 (130 aa).

The protein belongs to the UPF0102 family.

This is UPF0102 protein BT_1882 from Bartonella tribocorum (strain CIP 105476 / IBS 506).